We begin with the raw amino-acid sequence, 128 residues long: Ribonuclease P protein component (128 aa).

Belongs to the RnpA family. As to quaternary structure, consists of a catalytic RNA component (M1 or rnpB) and a protein subunit.

It carries out the reaction Endonucleolytic cleavage of RNA, removing 5'-extranucleotides from tRNA precursor.. Functionally, RNaseP catalyzes the removal of the 5'-leader sequence from pre-tRNA to produce the mature 5'-terminus. It can also cleave other RNA substrates such as 4.5S RNA. The protein component plays an auxiliary but essential role in vivo by binding to the 5'-leader sequence and broadening the substrate specificity of the ribozyme. The polypeptide is Ribonuclease P protein component (Prochlorococcus marinus (strain MIT 9301)).